Consider the following 370-residue polypeptide: MALETMTLSLSSSAMLSSGVVEDDKKQEAIVFPKFVLMGHRGFGMNMLQSPDEKMKFIKENSLLSFNVAADFPIDFIEFDVQVTRDGCPVIFHDIFMFTQEQGVIIEKRVTEMDLHEFLSYGPQRDGTNVKPMWRKTKDGRIFEWKVEKDDPLCTLEDAFLNVKHSLGFNIELKFDDNTVYGEGELRQTLDNILTVVNEHSKNRPIIFSSFHPDAARLIRNMQRCYPVFFLTNGGCEIYKDVRRNSLDEAIKLCKESGLQGLVSEVKAILRTPNAITRVKDSKLSLLSYGQLNNVVEVIYLQYLMGVEGVIVDMVKDISEAIANIEVTNEDDCEGEDERKCLIRFGEERKKVEITKDMITLLNKFVPKLL.

One can recognise a GP-PDE domain in the interval 35-322 (FVLMGHRGFG…DMVKDISEAI (288 aa)).

Belongs to the glycerophosphoryl diester phosphodiesterase family. Expressed in flowers and siliques.

It carries out the reaction a sn-glycero-3-phosphodiester + H2O = an alcohol + sn-glycerol 3-phosphate + H(+). This chain is Glycerophosphodiester phosphodiesterase GDPD3, found in Arabidopsis thaliana (Mouse-ear cress).